The chain runs to 357 residues: Alanine racemase (357 aa).

The Proton acceptor; specific for D-alanine role is filled by Lys35. An N6-(pyridoxal phosphate)lysine modification is found at Lys35. Residue Arg128 coordinates substrate. The active-site Proton acceptor; specific for L-alanine is Tyr254. A substrate-binding site is contributed by Met302.

Belongs to the alanine racemase family. The cofactor is pyridoxal 5'-phosphate.

The enzyme catalyses L-alanine = D-alanine. It functions in the pathway amino-acid biosynthesis; D-alanine biosynthesis; D-alanine from L-alanine: step 1/1. Catalyzes the interconversion of L-alanine and D-alanine. May also act on other amino acids. This Marinobacter nauticus (strain ATCC 700491 / DSM 11845 / VT8) (Marinobacter aquaeolei) protein is Alanine racemase (alr).